The following is a 213-amino-acid chain: Large ribosomal subunit protein uL1 (213 aa).

Belongs to the universal ribosomal protein uL1 family. In terms of assembly, part of the 50S ribosomal subunit.

In terms of biological role, binds directly to 23S rRNA. Probably involved in E site tRNA release. Functionally, protein L1 is also a translational repressor protein, it controls the translation of its operon by binding to its mRNA. The polypeptide is Large ribosomal subunit protein uL1 (Picrophilus torridus (strain ATCC 700027 / DSM 9790 / JCM 10055 / NBRC 100828 / KAW 2/3)).